We begin with the raw amino-acid sequence, 280 residues long: Manganese transport system membrane protein MntC (280 aa).

9 helical membrane-spanning segments follow: residues 16–36, 41–61, 62–82, 92–112, 137–157, 168–188, 193–213, 221–241, and 244–264; these read ALITSVTVGIVSGVIGSFIIL, LMGDAISHAVLPGVAISYMMG, MNFFIGAATFGIAAALGIGFV, TAIGIVFSAFFALGIILISFA, TIIIAIIVISLVALFYKEFLV, YGLNVKFLHYFLMLLLTLVTV, TVGIILVVAMLITPAATAYLL, IVLASTFGAVSAIIGLYFSYI, and LASGAAMVLVATIIFFIAFLF.

This sequence belongs to the ABC-3 integral membrane protein family.

Its subcellular location is the cell membrane. Functionally, this protein is probably a component of a manganese permease, a binding protein-dependent, ATP-driven transport system. The polypeptide is Manganese transport system membrane protein MntC (mntC) (Listeria monocytogenes serovar 1/2a (strain ATCC BAA-679 / EGD-e)).